A 38-amino-acid polypeptide reads, in one-letter code: Photosystem II reaction center protein X (38 aa).

The chain crosses the membrane as a helical span at residues 9–29 (ISSLTAGGLVVLTIAVALIVI).

It belongs to the PsbX family. Type 1 subfamily. PSII is composed of 1 copy each of membrane proteins PsbA, PsbB, PsbC, PsbD, PsbE, PsbF, PsbH, PsbI, PsbJ, PsbK, PsbL, PsbM, PsbT, PsbX, PsbY, PsbZ, Psb30/Ycf12, at least 3 peripheral proteins of the oxygen-evolving complex and a large number of cofactors. It forms dimeric complexes.

The protein resides in the plastid. Its subcellular location is the chloroplast thylakoid membrane. Its function is as follows. Involved in the binding and/or turnover of quinones at the Q(B) site of photosystem II (PSII). PSII is a light-driven water plastoquinone oxidoreductase, using light energy to abstract electrons from H(2)O, generating a proton gradient subsequently used for ATP formation. The chain is Photosystem II reaction center protein X from Trieres chinensis (Marine centric diatom).